Consider the following 68-residue polypeptide: Putative protein YfaH (68 aa).

The protein is Putative protein YfaH (yfaH) of Escherichia coli (strain K12).